The chain runs to 422 residues: MAAAAVVEFQRAQSLLSTDREASIDILHSIVKRDIQENDEEAVQVKEQSILELGSLLAKTGQAAELGGLLKYVRPFLNSISKAKAARLVRSLLDLFLDMEAATGQEVELCLECIEWAKSEKRTFLRQALEARLVSLYFDTKRYQEALHLGSQLLRELKKMDDKALLVEVQLLESKTYHALSNLPKARAALTSARTTANAIYCPPKLQATLDMQSGIIHAAEEKDWKTAYSYFYEAFEGYDSIDSPKAITSLKYMLLCKIMLNTPEDVQALVSGKLALRYAGRQTEALKCVAQASKNRSLADFEKALTDYRAELRDDPIISTHLAKLYDNLLEQNLIRVIEPFSRVQIEHISSLIKLSKADVERKLSQMILDKKFHGILDQGEGVLIIFDEPPVDKTYEAALETIQNMSKVVDSLYSKAKKLT.

N-acetylalanine is present on alanine 2. Residues serine 14 and serine 23 each carry the phosphoserine modification. One can recognise a PCI domain in the interval 224–392 (DWKTAYSYFY…GVLIIFDEPP (169 aa)). Residue lysine 274 forms a Glycyl lysine isopeptide (Lys-Gly) (interchain with G-Cter in SUMO2) linkage.

This sequence belongs to the proteasome subunit S9 family. Component of the 19S proteasome regulatory particle complex. The 26S proteasome consists of a 20S core particle (CP) and two 19S regulatory subunits (RP). The regulatory particle is made of a lid composed of 9 subunits including PSMD11, a base containing 6 ATPases and few additional components.

In terms of biological role, component of the 26S proteasome, a multiprotein complex involved in the ATP-dependent degradation of ubiquitinated proteins. This complex plays a key role in the maintenance of protein homeostasis by removing misfolded or damaged proteins, which could impair cellular functions, and by removing proteins whose functions are no longer required. Therefore, the proteasome participates in numerous cellular processes, including cell cycle progression, apoptosis, or DNA damage repair. In the complex, PSMD11 is required for proteasome assembly. Plays a key role in increased proteasome activity in embryonic stem cells (ESCs): its high expression in ESCs promotes enhanced assembly of the 26S proteasome, followed by higher proteasome activity. This is 26S proteasome non-ATPase regulatory subunit 11 (Psmd11) from Mus musculus (Mouse).